The following is a 154-amino-acid chain: Large ribosomal subunit protein uL22 (154 aa).

This sequence belongs to the universal ribosomal protein uL22 family. In terms of assembly, part of the 50S ribosomal subunit.

This protein binds specifically to 23S rRNA. It makes multiple contacts with different domains of the 23S rRNA in the assembled 50S subunit and ribosome. Its function is as follows. The globular domain of the protein is located near the polypeptide exit tunnel on the outside of the subunit, while an extended beta-hairpin is found that lines the wall of the exit tunnel in the center of the 70S ribosome. The polypeptide is Large ribosomal subunit protein uL22 (Methanoregula boonei (strain DSM 21154 / JCM 14090 / 6A8)).